Here is a 181-residue protein sequence, read N- to C-terminus: MKPSLEDTLLASIRTIPDYPKPGILFRDITTLLGNARAFRRAIDELVHPYAGQKVDKIAGIEARGFILGGAVAHQLSAGFVPIRKKGKLPFDTVRVAYSLEYGLDEMEMHKDGVAPGEKVILVDDLIATGGTAEAAVKLLRQIGADILAACFVIDLPDLGGRAKLEALGVPVRTLIGFEGH.

The protein belongs to the purine/pyrimidine phosphoribosyltransferase family. In terms of assembly, homodimer.

The protein localises to the cytoplasm. It catalyses the reaction AMP + diphosphate = 5-phospho-alpha-D-ribose 1-diphosphate + adenine. It participates in purine metabolism; AMP biosynthesis via salvage pathway; AMP from adenine: step 1/1. Its function is as follows. Catalyzes a salvage reaction resulting in the formation of AMP, that is energically less costly than de novo synthesis. In Mesorhizobium japonicum (strain LMG 29417 / CECT 9101 / MAFF 303099) (Mesorhizobium loti (strain MAFF 303099)), this protein is Adenine phosphoribosyltransferase.